Here is a 712-residue protein sequence, read N- to C-terminus: Polyribonucleotide nucleotidyltransferase (712 aa).

Mg(2+) is bound by residues aspartate 487 and aspartate 493. In terms of domain architecture, KH spans 554–613 (PKIITMTINPDKIRDVIGPSGKQINKIIEETGVKIDIEQDGTVFISSINQEMNDKAKKII). An S1 motif domain is found at 623–691 (GEIYEGKVKR…KQGRVNLSRK (69 aa)).

It belongs to the polyribonucleotide nucleotidyltransferase family. Requires Mg(2+) as cofactor.

The protein localises to the cytoplasm. The catalysed reaction is RNA(n+1) + phosphate = RNA(n) + a ribonucleoside 5'-diphosphate. Functionally, involved in mRNA degradation. Catalyzes the phosphorolysis of single-stranded polyribonucleotides processively in the 3'- to 5'-direction. This is Polyribonucleotide nucleotidyltransferase from Bacillus cereus (strain AH820).